The chain runs to 316 residues: Acetyl-coenzyme A carboxylase carboxyl transferase subunit beta (316 aa).

Positions 29 to 298 constitute a CoA carboxyltransferase N-terminal domain; it reads LWTKCPNCGV…LLSPLNSHHH (270 aa). Cys33, Cys36, Cys52, and Cys55 together coordinate Zn(2+). Residues 33 to 55 form a C4-type zinc finger; sequence CPNCGVLAYTKDLLANQLVCLDC.

This sequence belongs to the AccD/PCCB family. As to quaternary structure, acetyl-CoA carboxylase is a heterohexamer composed of biotin carboxyl carrier protein (AccB), biotin carboxylase (AccC) and two subunits each of ACCase subunit alpha (AccA) and ACCase subunit beta (AccD). The cofactor is Zn(2+).

It localises to the cytoplasm. It carries out the reaction N(6)-carboxybiotinyl-L-lysyl-[protein] + acetyl-CoA = N(6)-biotinyl-L-lysyl-[protein] + malonyl-CoA. It participates in lipid metabolism; malonyl-CoA biosynthesis; malonyl-CoA from acetyl-CoA: step 1/1. In terms of biological role, component of the acetyl coenzyme A carboxylase (ACC) complex. Biotin carboxylase (BC) catalyzes the carboxylation of biotin on its carrier protein (BCCP) and then the CO(2) group is transferred by the transcarboxylase to acetyl-CoA to form malonyl-CoA. The polypeptide is Acetyl-coenzyme A carboxylase carboxyl transferase subunit beta (Microcystis aeruginosa (strain NIES-843 / IAM M-2473)).